A 350-amino-acid chain; its full sequence is 3'-hydroxy-N-methyl-(S)-coclaurine 4'-O-methyltransferase (350 aa).

S-adenosyl-L-methionine-binding residues include glycine 196, aspartate 219, aspartate 239, methionine 240, and lysine 253. The active-site Proton acceptor is the histidine 257.

Belongs to the class I-like SAM-binding methyltransferase superfamily. Cation-independent O-methyltransferase family. COMT subfamily. Homodimer.

The catalysed reaction is (S)-3'-hydroxy-N-methylcoclaurine + S-adenosyl-L-methionine = (S)-reticuline + S-adenosyl-L-homocysteine + H(+). The protein operates within alkaloid biosynthesis; (S)-reticuline biosynthesis; (S)-reticuline from (S)-norcoclaurine: step 4/4. Its function is as follows. Catalyzes the transfer of the methyl group to the 4'-hydroxyl group of 3'-hydroxy-N-methylcoclaurine to form reticuline. The sequence is that of 3'-hydroxy-N-methyl-(S)-coclaurine 4'-O-methyltransferase from Coptis japonica (Japanese goldthread).